We begin with the raw amino-acid sequence, 262 residues long: Zinc import ATP-binding protein ZnuC (262 aa).

Positions 6–221 (IRLDKVAVTL…PAFVELFGKN (216 aa)) constitute an ABC transporter domain. 38–45 (GPNGAGKT) is a binding site for ATP.

Belongs to the ABC transporter superfamily. Zinc importer (TC 3.A.1.15.5) family. In terms of assembly, the complex is composed of two ATP-binding proteins (ZnuC), two transmembrane proteins (ZnuB) and a solute-binding protein (ZnuA).

The protein resides in the cell inner membrane. It catalyses the reaction Zn(2+)(out) + ATP(in) + H2O(in) = Zn(2+)(in) + ADP(in) + phosphate(in) + H(+)(in). Its function is as follows. Part of the ABC transporter complex ZnuABC involved in zinc import. Responsible for energy coupling to the transport system. The polypeptide is Zinc import ATP-binding protein ZnuC (Pseudomonas syringae pv. syringae (strain B728a)).